The chain runs to 491 residues: 4,4'-diapolycopen-4-al dehydrogenase (491 aa).

The active site involves glutamate 208.

The protein belongs to the carotenoid/retinoid oxidoreductase family. CrtN subfamily.

It carries out the reaction all-trans-4,4'-diapolycopen-4-al + A + H2O = all-trans-4,4'-diapolycopen-4-oate + AH2 + H(+). It functions in the pathway carotenoid biosynthesis. Its function is as follows. Involved in the biosynthesis of the major C30 carotenoid methyl 4'-[6-O-(acylglycosyl)oxy]-4,4'-diapolycopen-4-oic acid via 4,4'-diapolycopen-4-oic acid intermediate. Catalyzes the oxidation of 4,4'-diapolycopen-4-al to yield 4,4'-diapolycopen-4-oic acid. The protein is 4,4'-diapolycopen-4-al dehydrogenase of Metabacillus indicus (Bacillus indicus).